The following is a 678-amino-acid chain: PTS system glucose-specific EIICBA component (678 aa).

The PTS EIIC type-1 domain maps to 3–414 (KKLFGQLQRI…FKYKTPGRED (412 aa)). 11 helical membrane-spanning segments follow: residues 16-36 (LMLP…GTAM), 63-83 (AGGI…AIGL), 89-109 (VAAI…GAFL), 126-146 (VLGI…GALA), 170-190 (FVPI…AWIW), 211-231 (LAVF…LHHI), 273-293 (FMQG…LAIY), 303-323 (VVAG…ITEP), 329-349 (LFVA…SFLI), 355-375 (VHLG…GVLP), and 382-402 (LVIP…RFLI). The region spanning 425 to 506 (SELPFNVLKA…SLIMKGEITK (82 aa)) is the PTS EIIB type-1 domain. The Phosphocysteine intermediate; for EIIB activity role is filled by Cys-447. Positions 547–651 (DQVFAQKMMG…STVTPLIITN (105 aa)) constitute a PTS EIIA type-1 domain. His-599 (tele-phosphohistidine intermediate; for EIIA activity) is an active-site residue.

The protein localises to the cell membrane. It carries out the reaction N(pros)-phospho-L-histidyl-[protein] + D-glucose(out) = D-glucose 6-phosphate(in) + L-histidyl-[protein]. The phosphoenolpyruvate-dependent sugar phosphotransferase system (sugar PTS), a major carbohydrate active transport system, catalyzes the phosphorylation of incoming sugar substrates concomitantly with their translocation across the cell membrane. This system is involved in glucose transport. This is PTS system glucose-specific EIICBA component (ptsG) from Staphylococcus saprophyticus subsp. saprophyticus (strain ATCC 15305 / DSM 20229 / NCIMB 8711 / NCTC 7292 / S-41).